We begin with the raw amino-acid sequence, 140 residues long: Arsenate reductase ArsI2 (140 aa).

The active-site Nucleophile; cysteine thioarsenate intermediate is the Cys10.

This sequence belongs to the ArsC family.

It carries out the reaction [glutaredoxin]-dithiol + arsenate + glutathione + H(+) = glutathionyl-S-S-[glutaredoxin] + arsenite + H2O. In terms of biological role, catalyzes the reduction of arsenate [As(V)] to arsenite [As(III)]. Does not constitute the major arsenate reductase in cells: essential only in the absence of ArsC (AC P74313). The sequence is that of Arsenate reductase ArsI2 from Synechocystis sp. (strain ATCC 27184 / PCC 6803 / Kazusa).